The primary structure comprises 553 residues: Putative transport protein YidE (553 aa).

Transmembrane regions (helical) follow at residues 4–24, 28–48, 65–85, 95–115, and 158–178; these read IALTVSVLALVAVVGLWIGNI, GVGFGIGGVLFGGIIVGHFVD, FGLILFVYTIGIQVGPGFFAS, LFAVLIVIMGGLVTAILHKIF, and MSYAMAYPFGICGILLTMWLM. RCK C-terminal domains follow at residues 192 to 276 and 279 to 361; these read KHES…VIGK and DTSL…VVGN. 6 helical membrane-spanning segments follow: residues 371-391, 393-413, 437-457, 464-484, 493-513, and 533-553; these read MLPVFIGIGLGVLLGSIPLFV, GFPVALKLGLAGGPLIMALIL, LGIVLFLAVVGLKSGGDFVDT, LSWIGYGIFITAIPLITIGLL, YLTLCGMLAGSMTDPPALAFA, and LVMFLRIITPQLLAVIFWGMG.

The protein belongs to the AAE transporter (TC 2.A.81) family. YidE subfamily.

It localises to the cell membrane. This Salmonella paratyphi C (strain RKS4594) protein is Putative transport protein YidE.